The sequence spans 173 residues: MQQALFGGGCFWCVEAVFLQIRGVEKVTSGYAGGHTTHPTYEQVCQGDTQHAEVVLIDFDEQQVTYSQLLDVFFATHDPTTLNRQGNDIGTQYRSVIYYFNEEQKQAAEHTIQTLKDDDLDIVTELSPAPTFYPAEDYHQNYYEKNPSQGYCNFAIPPKLLKLHSKFQHLMKN.

Residue Cys10 is part of the active site.

It belongs to the MsrA Met sulfoxide reductase family.

The catalysed reaction is L-methionyl-[protein] + [thioredoxin]-disulfide + H2O = L-methionyl-(S)-S-oxide-[protein] + [thioredoxin]-dithiol. The enzyme catalyses [thioredoxin]-disulfide + L-methionine + H2O = L-methionine (S)-S-oxide + [thioredoxin]-dithiol. Has an important function as a repair enzyme for proteins that have been inactivated by oxidation. Catalyzes the reversible oxidation-reduction of methionine sulfoxide in proteins to methionine. This chain is Peptide methionine sulfoxide reductase MsrA, found in Acinetobacter baumannii (strain AB307-0294).